We begin with the raw amino-acid sequence, 498 residues long: ATP synthase subunit beta, chloroplastic (498 aa).

172–179 (GGAGVGKT) is a binding site for ATP.

This sequence belongs to the ATPase alpha/beta chains family. F-type ATPases have 2 components, CF(1) - the catalytic core - and CF(0) - the membrane proton channel. CF(1) has five subunits: alpha(3), beta(3), gamma(1), delta(1), epsilon(1). CF(0) has four main subunits: a(1), b(1), b'(1) and c(9-12).

Its subcellular location is the plastid. The protein localises to the chloroplast thylakoid membrane. The catalysed reaction is ATP + H2O + 4 H(+)(in) = ADP + phosphate + 5 H(+)(out). Produces ATP from ADP in the presence of a proton gradient across the membrane. The catalytic sites are hosted primarily by the beta subunits. The protein is ATP synthase subunit beta, chloroplastic of Eucalyptus globulus subsp. globulus (Tasmanian blue gum).